The sequence spans 326 residues: Tetraacyldisaccharide 4'-kinase (326 aa).

Residue 55 to 62 (TVGGNGKT) participates in ATP binding.

This sequence belongs to the LpxK family.

The enzyme catalyses a lipid A disaccharide + ATP = a lipid IVA + ADP + H(+). It participates in glycolipid biosynthesis; lipid IV(A) biosynthesis; lipid IV(A) from (3R)-3-hydroxytetradecanoyl-[acyl-carrier-protein] and UDP-N-acetyl-alpha-D-glucosamine: step 6/6. Functionally, transfers the gamma-phosphate of ATP to the 4'-position of a tetraacyldisaccharide 1-phosphate intermediate (termed DS-1-P) to form tetraacyldisaccharide 1,4'-bis-phosphate (lipid IVA). The polypeptide is Tetraacyldisaccharide 4'-kinase (Tolumonas auensis (strain DSM 9187 / NBRC 110442 / TA 4)).